The primary structure comprises 266 residues: GTP cyclohydrolase MptA (266 aa).

The protein belongs to the GTP cyclohydrolase IV family. As to quaternary structure, homodimer. It depends on Fe(2+) as a cofactor.

The catalysed reaction is GTP + H2O = 7,8-dihydroneopterin 2',3'-cyclic phosphate + formate + diphosphate + H(+). Its pathway is cofactor biosynthesis; 5,6,7,8-tetrahydromethanopterin biosynthesis. Functionally, converts GTP to 7,8-dihydro-D-neopterin 2',3'-cyclic phosphate, the first intermediate in the biosynthesis of coenzyme methanopterin. This is GTP cyclohydrolase MptA from Pyrococcus abyssi (strain GE5 / Orsay).